The following is a 437-amino-acid chain: tRNA(Ile2) 2-agmatinylcytidine synthetase TiaS (437 aa).

This sequence belongs to the TiaS family.

The protein resides in the cytoplasm. It catalyses the reaction cytidine(34) in tRNA(Ile2) + agmatine + ATP + H2O = 2-agmatinylcytidine(34) in tRNA(Ile2) + AMP + 2 phosphate + 2 H(+). In terms of biological role, ATP-dependent agmatine transferase that catalyzes the formation of 2-agmatinylcytidine (agm2C) at the wobble position (C34) of tRNA(Ile2), converting the codon specificity from AUG to AUA. This chain is tRNA(Ile2) 2-agmatinylcytidine synthetase TiaS, found in Acidilobus saccharovorans (strain DSM 16705 / JCM 18335 / VKM B-2471 / 345-15).